Reading from the N-terminus, the 431-residue chain is FAD-dependent monooxygenase nodY1 (431 aa).

The first 21 residues, 1-21, serve as a signal peptide directing secretion; the sequence is MASTGVSVIVVGLGLAGLTTA. FAD is bound by residues E35 and R110. Residue R188 is part of the active site. Position 313 (D313) interacts with FAD.

It belongs to the paxM FAD-dependent monooxygenase family. Requires FAD as cofactor.

Its pathway is secondary metabolite biosynthesis. Its function is as follows. FAD-dependent monooxygenase; part of the gene cluster that mediates the biosynthesis of the indole diterpenes nodulisporic acids (NA). Nodulisporic acid A (NAA) and its chemically modified derivatives are of particular significance because of their highly potent insecticidal activity against blood-feeding arthropods and lack of observable adverse effects on mammals, in particular the tremogenicity associated with the paspaline-derived IDTs is not observed. The geranylgeranyl diphosphate (GGPP) synthase ggs1, localized outside of the cluster, is proposed to catalyze the first step in nodulisporic acid biosynthesis via conversion of farnesyl pyrophosphate and isopentyl pyrophosphate into geranylgeranyl pyrophosphate (GGPP). Condensation of indole-3-glycerol phosphate with GGPP by the prenyl transferase nodC then forms 3-geranylgeranylindole (3-GGI). Epoxidation by the FAD-dependent monooxygenase nodM leads to a single-epoxidized-GGI that is substrate of the terpene cyclase nodB for cyclization to yield emindole SB. The terminal methyl carbon, C28, of emindole SB is then oxidized by the cytochrome P450 monooxygenase nodW to produce nodulisporic acid F (NAF), the pentacyclic core of NAA. NAF is converted to nodulisporic acid E (NAE) via prenylation. This step is probably performed by one of the indole diterpene prenyltransferases nodD1 or nodD2. Several oxidation steps performed by the FAD-linked oxidoreductase nodO and one of the cytochrome P450 monooxygenase nodR, nodX or nodZ further convert NAE to nodulisporic acid D (NAD). NAD is substrate of cytochrome P450 monooxygenase nodJ to produce the precursor of nodulisporic acid C (NAC), converted to NAC by one of the indole diterpene prenyltransferases nodD1 or nodD2. The FAD-dependent monooxygenase nodY2 then oxidizes NAC to nodulisporic acid B (NAB). Finally NAB is converted to NAA by one of the cytochrome P450 monooxygenases nodR, nodX or nodZ. This Hypoxylon pulicicidum protein is FAD-dependent monooxygenase nodY1.